The chain runs to 513 residues: Glutamyl-tRNA(Gln) amidotransferase subunit A (513 aa).

Active-site charge relay system residues include Lys85 and Ser160. Ser184 acts as the Acyl-ester intermediate in catalysis.

It belongs to the amidase family. GatA subfamily. In terms of assembly, heterotrimer of A, B and C subunits.

It carries out the reaction L-glutamyl-tRNA(Gln) + L-glutamine + ATP + H2O = L-glutaminyl-tRNA(Gln) + L-glutamate + ADP + phosphate + H(+). Allows the formation of correctly charged Gln-tRNA(Gln) through the transamidation of misacylated Glu-tRNA(Gln) in organisms which lack glutaminyl-tRNA synthetase. The reaction takes place in the presence of glutamine and ATP through an activated gamma-phospho-Glu-tRNA(Gln). In Bifidobacterium longum (strain NCC 2705), this protein is Glutamyl-tRNA(Gln) amidotransferase subunit A.